The chain runs to 574 residues: Developmental and secondary metabolism regulator veA (574 aa).

Disordered stretches follow at residues 1-22, 39-60, 255-500, and 513-548; these read MATRAPLAPPPNETEASVSRIT, ERARACGAGAKSSADRRPVDPP, RSSD…GAGK, and RSYEDSFGHDDRPLYNGMRPDTESHPRRLSDAGRNF. The 206-residue stretch at 25–230 folds into the Velvet domain; the sequence is GKKLTYKLNV…AEQGCRVRIR (206 aa). Positions 39 to 44 match the Nuclear localization signal motif; that stretch reads ERARAC. 2 stretches are compositionally biased toward pro residues: residues 314–323 and 330–341; these read RPMPPAPVPA and PAPPAPPAPPSH. 4 stretches are compositionally biased toward polar residues: residues 343–359, 385–394, 402–415, and 448–458; these read PGYQSHLSFGSTQTQYP, HARNPSTSAE, YPSSRVSTERSSYP, and VAQSAGPRSQT. Positions 457–501 are PEST; it reads QTPSSSLVPSLPPLKALSGDYPNNLSQPSSSISQSPSHDLGAGKK. 2 stretches are compositionally biased toward low complexity: residues 459-474 and 482-493; these read PSSSLVPSLPPLKALS and SQPSSSISQSPS. 2 stretches are compositionally biased toward basic and acidic residues: residues 513 to 525 and 532 to 543; these read RSYEDSFGHDDRP and PDTESHPRRLSD.

The protein belongs to the velvet family. VeA subfamily. Component of the heterotrimeric velvet complex composed of laeA, veA and velB; VeA acting as a bridging protein between laeA and velB.

The protein localises to the nucleus. The protein resides in the cytoplasm. In terms of biological role, component of the velvet transcription factor complex that controls sexual/asexual developmental ratio in response to light, promoting sexual development in the darkness while stimulating asexual sporulation under illumination. The velvet complex hat acts as a global regulator for secondary metabolite gene expression. Controls the expression of the aflatoxin gene cluster. Required for the expression of aflR and aflJ. Mediates the coordination of aflatoxigenic vesicles (aflatoxisomes) development with aflatoxin gene expression. Regulates branched chain amino acid and ethanol metabolism and acts as a positive regulator of mitochondrial and peroxisomal beta-oxidation. The polypeptide is Developmental and secondary metabolism regulator veA (Aspergillus parasiticus).